Here is a 430-residue protein sequence, read N- to C-terminus: Proteinase-activated receptor 1 (430 aa).

The first 21 residues, 1-21 (MGPRRLLIVALGLSLCGPLLS), serve as a signal peptide directing secretion. Residues 22 to 41 (SRVPMSQPESERTDATVNPR) constitute a propeptide, removed for receptor activation. Residues 42-107 (SFFLRNPSEN…SGYLTSPWLT (66 aa)) lie on the Extracellular side of the membrane. Residues N67 and N80 are each glycosylated (N-linked (GlcNAc...) asparagine). A helical membrane pass occupies residues 108–133 (LFMPSVYTIVFIVSLPLNVLAIAVFV). Topologically, residues 134-142 (LRMKVKKPA) are cytoplasmic. Residues 143 to 162 (VVYMLHLAMADVLFVSVLPF) form a helical membrane-spanning segment. Topologically, residues 163-181 (KISYYFSGTDWQFGSGMCR) are extracellular. Cysteines 180 and 259 form a disulfide. The helical transmembrane segment at 182–203 (FATAAFYGNMYASIMLMTVISI) threads the bilayer. Residues 204–223 (DRFLAVVYPIQSLSWRTLGR) lie on the Cytoplasmic side of the membrane. A helical transmembrane segment spans residues 224–244 (ANFTCVVIWVMAIMGVVPLLL). Over 245 to 273 (KEQTTRVPGLNITTCHDVLSENLMQGFYS) the chain is Extracellular. N255 carries an N-linked (GlcNAc...) asparagine glycan. The chain crosses the membrane as a helical span at residues 274-293 (YYFSAFSAIFFLVPLIVSTV). Residues 294-316 (CYTSIIRCLSSSAVANRSKKSRA) lie on the Cytoplasmic side of the membrane. Residues 317 to 339 (LFLSAAVFCIFIVCFGPTNVLLI) traverse the membrane as a helical segment. Topologically, residues 340–354 (VHYLFLSDSPGTEAA) are extracellular. Residues 355–379 (YFAYLLCVCVSSVSCCIDPLIYYYA) traverse the membrane as a helical segment. Residues 380–430 (SSECQRHLYSILCCKESSDPNSCNSTGQLMPSKMDTCSSHLNNSIYKKLLA) lie on the Cytoplasmic side of the membrane. S423 is subject to Phosphoserine.

This sequence belongs to the G-protein coupled receptor 1 family. Post-translationally, proteolytic cleavage by thrombin generates a new N-terminus that functions as a tethered ligand. Also proteolytically cleaved by cathepsin CTSG. In terms of processing, phosphorylated in the C-terminal tail; probably mediating desensitization prior to the uncoupling and internalization of the receptor.

It localises to the cell membrane. High affinity receptor that binds the activated thrombin, leading to calcium release from intracellular stores. The thrombin-activated receptor signaling pathway is mediated through PTX-insensitive G proteins, activation of phospholipase C resulting in the production of 1D-myo-inositol 1,4,5-trisphosphate (InsP3) which binds to InsP3 receptors causing calcium release from the stores. In astrocytes, the calcium released into the cytosol allows the Ca(2+)-dependent release of L-glutamate into the synaptic cleft through BEST1, that targets the neuronal postsynaptic GRIN2A/NMDAR receptor resulting in the synaptic plasticity regulation. May play a role in platelets activation and in vascular development. Mediates up-regulation of pro-inflammatory cytokines, such as MCP-1/CCL2 and IL6, triggered by coagulation factor Xa (F10) in cardiac fibroblasts and umbilical vein endothelial cells. The polypeptide is Proteinase-activated receptor 1 (Mus musculus (Mouse)).